Consider the following 1037-residue polypeptide: Signal-induced proliferation-associated protein 1 (1037 aa).

Residues 1–85 (MWAGGVGSPR…ASRPAATPTR (85 aa)) are disordered. Residue Thr-62 is modified to Phosphothreonine. 4 positions are modified to phosphoserine: Ser-65, Ser-178, Ser-299, and Ser-309. One can recognise a Rap-GAP domain in the interval 316 to 534 (LLTLDEQVLS…RTRQQYLQDL (219 aa)). The region spanning 682-758 (ELALPRDGQG…VCVTVLPPDE (77 aa)) is the PDZ domain. A phosphoserine mark is found at Ser-812 and Ser-834. 2 disordered regions span residues 830–849 (HNSLSSGSSLSDEAPVLPNT) and 855–898 (LVTT…ASIL). Over residues 871-881 (PPSQDQSGSPS) the composition is skewed to low complexity. A Phosphoserine modification is found at Ser-907. Residues 943-969 (REGQPISESGDPKEALKCDSEPEPGSL) are disordered. Residues 952–962 (GDPKEALKCDS) show a composition bias toward basic and acidic residues. A coiled-coil region spans residues 968–1025 (SLSEKVSHLESMLWKLQEDLQREKADRAALEEEVRSLRHNNQRLLAESESAATRLLLA).

As to quaternary structure, interacts with RRP1B; the interaction leads to inhibition of SIPA1 GTPase activity. As to expression, preferentially expressed in both fetal and adult lymphohematopoietic tissues.

Its subcellular location is the nucleus. The protein resides in the cytoplasm. It is found in the perinuclear region. The protein localises to the endomembrane system. In terms of biological role, GTPase activator for the nuclear Ras-related regulatory proteins Rap1, Rsr1 and Ran in vitro, converting them to the putatively inactive GDP-bound state. Affects cell cycle progression. The protein is Signal-induced proliferation-associated protein 1 (Sipa1) of Mus musculus (Mouse).